Reading from the N-terminus, the 273-residue chain is Large ribosomal subunit protein uL2cz/uL2cy (273 aa).

Disordered stretches follow at residues 1–25 (MAKHLYKTPIPSTRKGTLDRQVKSN) and 225–253 (PVDHPHGGGEGKAPIGRKKPTTPWGYPAL).

This sequence belongs to the universal ribosomal protein uL2 family. In terms of assembly, part of the 50S ribosomal subunit.

The protein resides in the plastid. It is found in the chloroplast. The protein is Large ribosomal subunit protein uL2cz/uL2cy (rpl2-A) of Triticum aestivum (Wheat).